Reading from the N-terminus, the 61-residue chain is Small ribosomal subunit protein uS14 (61 aa).

Residues C24, C27, C40, and C43 each coordinate Zn(2+).

The protein belongs to the universal ribosomal protein uS14 family. Zinc-binding uS14 subfamily. As to quaternary structure, part of the 30S ribosomal subunit. Contacts proteins S3 and S10. The cofactor is Zn(2+).

In terms of biological role, binds 16S rRNA, required for the assembly of 30S particles and may also be responsible for determining the conformation of the 16S rRNA at the A site. The chain is Small ribosomal subunit protein uS14 from Petrotoga mobilis (strain DSM 10674 / SJ95).